A 228-amino-acid chain; its full sequence is uncharacterized protein (228 aa).

Gly-21 to Thr-28 is a binding site for ATP.

This is an uncharacterized protein from Mycoplasma genitalium (strain ATCC 33530 / DSM 19775 / NCTC 10195 / G37) (Mycoplasmoides genitalium).